A 798-amino-acid polypeptide reads, in one-letter code: Nuclear cap-binding protein subunit 1 (798 aa).

The MIF4G domain occupies 28 to 241 (EKKLQGVIGK…SLSAQIEALR (214 aa)). A disordered region spans residues 663–686 (NKIKEEDDEESDIKMDEDETKEEK). The span at 668-682 (EDDEESDIKMDEDET) shows a compositional bias: acidic residues.

This sequence belongs to the NCBP1 family. As to quaternary structure, component of the nuclear cap-binding complex (CBC), a heterodimer composed of ncbp-1 and ncbp-1 that interacts with m7GpppG-capped RNA.

Its subcellular location is the nucleus. In terms of biological role, component of the cap-binding complex (CBC), which binds cotranscriptionally to the 5'-cap of pre-mRNAs and is involved in various processes such as pre-mRNA splicing and RNA-mediated gene silencing (RNAi). The CBC complex is involved in miRNA-mediated RNA interference and is required for primary microRNAs (miRNAs) processing. In the CBC complex, ncbp-1 does not bind directly capped RNAs (m7GpppG-capped RNA) but is required to stabilize the movement of the N-terminal loop of ncbp-2 and lock the CBC into a high affinity cap-binding state with the cap structure. This Caenorhabditis elegans protein is Nuclear cap-binding protein subunit 1 (ncbp-1).